Reading from the N-terminus, the 1406-residue chain is Carboxypeptidase D (1406 aa).

Residues 1–25 form the signal peptide; the sequence is MPTLGLLFASIGIAVLAMGVPHCRG. Topologically, residues 26 to 1312 are extracellular; it reads YTIKEDESFL…VNEHVFGLPR (1287 aa). Peptidase M14 domains follow at residues 39-335 and 455-760; these read HYAS…LRQA and EHHN…IEQV. Positions 101 and 104 each coordinate Zn(2+). A glycan (N-linked (GlcNAc...) asparagine) is linked at N133. 3 cysteine pairs are disulfide-bonded: C156–C309, C236–C237, and C268–C308. Residue H217 coordinates Zn(2+). An N-linked (GlcNAc...) asparagine glycan is attached at N269. The active-site Proton donor/acceptor is E305. N-linked (GlcNAc...) asparagine glycosylation is present at N458. The Zn(2+) site is built by H517 and E520. N-linked (GlcNAc...) asparagine glycosylation is found at N549 and N612. Residue H626 participates in Zn(2+) binding. Residue N652 is glycosylated (N-linked (GlcNAc...) asparagine). Residue E730 is the Proton donor/acceptor of the active site. Residues N787, N808, N981, N1152, and N1251 are each glycosylated (N-linked (GlcNAc...) asparagine). A Peptidase M14 3 domain is found at 863-1121; that stretch reads RYHTNPQVRA…DKIKNFLALV (259 aa). The helical transmembrane segment at 1313 to 1333 threads the bilayer; sequence FLFILCASVLIIVGVIVCVLC. Residues 1334 to 1406 lie on the Cytoplasmic side of the membrane; that stretch reads AQFWFYRRHR…TNYSFIIQAA (73 aa). A Cell attachment site motif is present at residues 1343–1345; it reads RGD. Phosphoserine is present on S1380.

This sequence belongs to the peptidase M14 family. Monomer. Zn(2+) is required as a cofactor. As to expression, expressed in the central nervous system (CNS) of adults and larvae. In the adult brain, increased levels of expression in the mushroom body (MB) and neurosecretory cells.

Its subcellular location is the membrane. The protein resides in the cytoplasm. It is found in the perinuclear region. It localises to the golgi apparatus. The protein localises to the trans-Golgi network. Its subcellular location is the secreted. It catalyses the reaction Releases C-terminal Arg and Lys from polypeptides.. With respect to regulation, inhibited by 2-guanidinoethylmercaptosuccinic acid (GEMSA). In terms of biological role, metallocarboxypeptidase that catalyzes the release of C-terminal arginine or lysine residues from peptides and proteins. Functionally important for processing a broad range of proteins including growth factors, peptide hormones (such as Akh) and neuropeptides. Consequently, it is involved in a wide range of processes including viability, memory formation, locomotive activity, wing formation, and peptide-regulated behaviors such as starvation-induced hyperactivity, appetitive gustatory preference, and cold and ethanol sensitivity. Key enzyme in neuropeptide processing. Involved in regulation of memory formation, possibly via the insulin pathway in neurosecretory cells. The chain is Carboxypeptidase D from Drosophila melanogaster (Fruit fly).